The chain runs to 389 residues: Lipid-A-disaccharide synthase (389 aa).

It belongs to the LpxB family.

It catalyses the reaction a lipid X + a UDP-2-N,3-O-bis[(3R)-3-hydroxyacyl]-alpha-D-glucosamine = a lipid A disaccharide + UDP + H(+). It functions in the pathway bacterial outer membrane biogenesis; LPS lipid A biosynthesis. Condensation of UDP-2,3-diacylglucosamine and 2,3-diacylglucosamine-1-phosphate to form lipid A disaccharide, a precursor of lipid A, a phosphorylated glycolipid that anchors the lipopolysaccharide to the outer membrane of the cell. This Albidiferax ferrireducens (strain ATCC BAA-621 / DSM 15236 / T118) (Rhodoferax ferrireducens) protein is Lipid-A-disaccharide synthase.